The following is a 1180-amino-acid chain: Polyamine-transporting ATPase 13A2 (1180 aa).

At 1–44 (MSADSSPLVGSTPTGYGTLTIGTSIDPLSSSVSSVRLSGYCGSP) the chain is on the cytoplasmic side. Residues 45–65 (WRVIGYHVVVWMMAGIPLLLF) lie within the membrane without spanning it. Over 66-235 (RWKPLWGVRL…KSYPQLLVDE (170 aa)) the chain is Cytoplasmic. Ser151 is subject to Phosphoserine. The helical transmembrane segment at 236 to 253 (ALNPYYGFQAFSIALWLA) threads the bilayer. The Lumenal portion of the chain corresponds to 254 to 256 (DHY). The chain crosses the membrane as a helical span at residues 257-276 (YWYALCIFLISSISICLSLY). Topologically, residues 277 to 427 (KTRKQSQTLR…NFKFYKHSMK (151 aa)) are cytoplasmic. The helical transmembrane segment at 428–448 (FVAALSVLALLGTIYSIFILY) threads the bilayer. The Lumenal segment spans residues 449-463 (RNRVPLNEIVIRALD). The helical transmembrane segment at 464–484 (LVTVVVPPALPAAMTVCTLYA) threads the bilayer. Residues 485–930 (QSRLRRQGIF…REGRCSLDTS (446 aa)) lie on the Cytoplasmic side of the membrane. Asp513 functions as the 4-aspartylphosphate intermediate in the catalytic mechanism. The Mg(2+) site is built by Asp878 and Asp882. The helical transmembrane segment at 931–951 (FSVFKYMALYSLTQFISVLIL) threads the bilayer. Over 952-957 (YTINTN) the chain is Lumenal. A helical membrane pass occupies residues 958 to 978 (LGDLQFLAIDLVITTTVAVLM). Residues 979-994 (SRTGPALVLGRVRPPG) lie on the Cytoplasmic side of the membrane. A helical transmembrane segment spans residues 995-1015 (ALLSVPVLSSLLLQMVLVTGV). Residues 1016-1048 (QLGGYFLTLAQPWFVPLNRTVAAPDNLPNYENT) are Lumenal-facing. Asn1033 is a glycosylation site (N-linked (GlcNAc...) asparagine). The helical transmembrane segment at 1049-1069 (VVFSLSSFQYLILAAAVSKGA) threads the bilayer. Topologically, residues 1070-1080 (PFRRPLYTNVP) are cytoplasmic. Residues 1081 to 1101 (FLVALALLSSVLVGLVLVPGL) form a helical membrane-spanning segment. The Lumenal segment spans residues 1102–1117 (LQGPLALRNITDTGFK). An N-linked (GlcNAc...) asparagine glycan is attached at Asn1110. The helical transmembrane segment at 1118-1138 (LLLLGLVTLNFVGAFMLESVL) threads the bilayer. Residues 1139–1180 (DQCLPACLRRLRPKRASKKRFKQLERELAEQPWPPLPAGPLR) are Cytoplasmic-facing.

This sequence belongs to the cation transport ATPase (P-type) (TC 3.A.3) family. Type V subfamily. In terms of assembly, interacts with MYCBP2; the interaction inhibits the ubiquitination of TSC2 by MYCBP2. Interacts with HDAC6; the interaction results in recruitment of HDAC6 to lysosomes to promote CTTN deacetylation. In terms of processing, autophosphorylated. Accumulates in an inactive autophosphorylated state and autophosphorylation is stimulated by phosphatidic acid and phosphatidylinositol 3,5-bisphosphate but not by Mn(2+) or Zn(2+). The presence of spermine results in a dose-dependent reduction in autophosphorylation. In terms of tissue distribution, expressed in brain; protein levels are markedly increased in brain from subjects with Parkinson disease and subjects with dementia with Lewy bodies. Detected in pyramidal neurons located throughout the cingulate cortex (at protein level). In the substantia nigra, it is found in neuromelanin-positive dopaminergic neurons (at protein level).

Its subcellular location is the lysosome membrane. It localises to the late endosome membrane. The protein localises to the endosome. It is found in the multivesicular body membrane. The protein resides in the cytoplasmic vesicle. Its subcellular location is the autophagosome membrane. The catalysed reaction is spermidine(out) + ATP + H2O = spermidine(in) + ADP + phosphate + H(+). It catalyses the reaction spermine(out) + ATP + H2O = spermine(in) + ADP + phosphate + H(+). Accumulates in an inactive autophosphorylated state. The presence of spermine results in a dose-dependent reduction in autophosphorylation. In terms of biological role, ATPase which acts as a lysosomal polyamine exporter with high affinity for spermine. Also stimulates cellular uptake of polyamines and protects against polyamine toxicity. Plays a role in intracellular cation homeostasis and the maintenance of neuronal integrity. Contributes to cellular zinc homeostasis. Confers cellular protection against Mn(2+) and Zn(2+) toxicity and mitochondrial stress. Required for proper lysosomal and mitochondrial maintenance. Regulates the autophagy-lysosome pathway through the control of SYT11 expression at both transcriptional and post-translational levels. Facilitates recruitment of deacetylase HDAC6 to lysosomes to deacetylate CTTN, leading to actin polymerization, promotion of autophagosome-lysosome fusion and completion of autophagy. Promotes secretion of exosomes as well as secretion of SCNA via exosomes. Plays a role in lipid homeostasis. In Homo sapiens (Human), this protein is Polyamine-transporting ATPase 13A2.